We begin with the raw amino-acid sequence, 330 residues long: G-protein coupled receptor 157 (330 aa).

Residues 1 to 15 (MPTPAPPTELLPWER) lie on the Extracellular side of the membrane. A helical membrane pass occupies residues 16–36 (AVVLLSCVLSALGSGLLVATH). At 37–48 (ALWPDLRSRARR) the chain is on the cytoplasmic side. Residues 49 to 69 (LLLFLSLADLLSAASYFYGVL) form a helical membrane-spanning segment. Topologically, residues 70 to 87 (QDFAGTSWDCVLQGALST) are extracellular. Residues 88 to 108 (FANTSSFFWTVAIALYLYLNI) traverse the membrane as a helical segment. Topologically, residues 109–119 (VRATRGPCTDH) are cytoplasmic. The chain crosses the membrane as a helical span at residues 120 to 140 (LVWAFHLISWGVPLAITVAAV). The Extracellular segment spans residues 141 to 166 (CLKKIGYDASDVSVGWCWINLEAEDR). Residues 167–187 (VLWMLLTGKLWEMLAYILLPL) form a helical membrane-spanning segment. The Cytoplasmic portion of the chain corresponds to 188–227 (LYLLVRKHINRAHQALSEYRPIWEGRQLQRGSPTSMADKK). A helical membrane pass occupies residues 228–250 (LILIPFIFICLRVWSTVRFVLTL). Topologically, residues 251–259 (CGSPVVQAP) are extracellular. A helical transmembrane segment spans residues 260–282 (VLVVLHGIGNTFQGGANCIMFVL). The Cytoplasmic portion of the chain corresponds to 283-330 (CTRAVRTRLFSLCCCYPRPPTQNPPGASIPPKMGESQESRRTPEVPST). The tract at residues 303–330 (TQNPPGASIPPKMGESQESRRTPEVPST) is disordered. Positions 317-330 (ESQESRRTPEVPST) are enriched in basic and acidic residues.

Belongs to the G-protein coupled receptor 2 family.

The protein resides in the cell projection. It is found in the cilium membrane. Functionally, orphan receptor that promotes neuronal differentiation of radial glial progenitors (RGPs). The activity of this receptor is mediated by a G(q)-protein that activates a phosphatidylinositol-calcium second messenger. This is G-protein coupled receptor 157 (Gpr157) from Rattus norvegicus (Rat).